We begin with the raw amino-acid sequence, 183 residues long: Outer membrane protein H.8 (183 aa).

The signal sequence occupies residues 1 to 17; the sequence is MKAYLALISAAVIGLAA. The N-palmitoyl cysteine moiety is linked to residue cysteine 18. Cysteine 18 carries the S-diacylglycerol cysteine lipid modification. Residues 27–51 form a disordered region; sequence AEATPAGEAPASEAPAAEAAPADAA. In terms of domain architecture, Plastocyanin-like spans 57–183; that stretch reads GNCAATVESN…LMNGKVTLVD (127 aa). Histidine 102, cysteine 166, histidine 171, and methionine 175 together coordinate Cu cation.

Cu cation serves as cofactor.

It localises to the cell outer membrane. This chain is Outer membrane protein H.8, found in Neisseria gonorrhoeae.